The primary structure comprises 357 residues: 3-isopropylmalate dehydrogenase (357 aa).

77–90 (GPKWDTLPGEKRPE) contributes to the NAD(+) binding site. Substrate-binding residues include arginine 97, arginine 107, arginine 136, and aspartate 224. Mg(2+)-binding residues include aspartate 224, aspartate 248, and aspartate 252. 282-294 (GSAPDIAGQDLAN) is an NAD(+) binding site.

Belongs to the isocitrate and isopropylmalate dehydrogenases family. LeuB type 1 subfamily. As to quaternary structure, homodimer. Mg(2+) is required as a cofactor. Requires Mn(2+) as cofactor.

It localises to the cytoplasm. The catalysed reaction is (2R,3S)-3-isopropylmalate + NAD(+) = 4-methyl-2-oxopentanoate + CO2 + NADH. Its pathway is amino-acid biosynthesis; L-leucine biosynthesis; L-leucine from 3-methyl-2-oxobutanoate: step 3/4. Functionally, catalyzes the oxidation of 3-carboxy-2-hydroxy-4-methylpentanoate (3-isopropylmalate) to 3-carboxy-4-methyl-2-oxopentanoate. The product decarboxylates to 4-methyl-2 oxopentanoate. This Clostridium acetobutylicum (strain ATCC 824 / DSM 792 / JCM 1419 / IAM 19013 / LMG 5710 / NBRC 13948 / NRRL B-527 / VKM B-1787 / 2291 / W) protein is 3-isopropylmalate dehydrogenase.